The chain runs to 100 residues: MELTPREKDKLLLFTAALLAERRLARGLKLNYPEAVALISAAVLEGARDGRTVAELMSLGREVLTREQVMPGIAEMLHDVQVEATFPDGTKLVTVHDPIV.

This sequence belongs to the urease gamma subunit family. Heterotrimer of UreA (gamma), UreB (beta) and UreC (alpha) subunits. Three heterotrimers associate to form the active enzyme.

It is found in the cytoplasm. It catalyses the reaction urea + 2 H2O + H(+) = hydrogencarbonate + 2 NH4(+). Its pathway is nitrogen metabolism; urea degradation; CO(2) and NH(3) from urea (urease route): step 1/1. This is Urease subunit gamma from Pseudomonas putida (strain ATCC 700007 / DSM 6899 / JCM 31910 / BCRC 17059 / LMG 24140 / F1).